Reading from the N-terminus, the 441-residue chain is Phosphoribosylamine--glycine ligase (441 aa).

The 208-residue stretch at 112-319 folds into the ATP-grasp domain; the sequence is RNFMKKYGIE…FTEIMSAVVK (208 aa). An ATP-binding site is contributed by 139–196; the sequence is IEKLGDVAVKPSGLTGGKGVKVMGDQLPDLKAAKDYTSELLEKGPVVIEERFIGEEFT. Residues glutamine 277, glutamate 289, and asparagine 291 each contribute to the Mg(2+) site. Residues glutamine 277, glutamate 289, and asparagine 291 each coordinate Mn(2+).

It belongs to the GARS family. Mg(2+) serves as cofactor. Mn(2+) is required as a cofactor.

It catalyses the reaction 5-phospho-beta-D-ribosylamine + glycine + ATP = N(1)-(5-phospho-beta-D-ribosyl)glycinamide + ADP + phosphate + H(+). It functions in the pathway purine metabolism; IMP biosynthesis via de novo pathway; N(1)-(5-phospho-D-ribosyl)glycinamide from 5-phospho-alpha-D-ribose 1-diphosphate: step 2/2. This Methanosarcina acetivorans (strain ATCC 35395 / DSM 2834 / JCM 12185 / C2A) protein is Phosphoribosylamine--glycine ligase.